Reading from the N-terminus, the 448-residue chain is Homogentisate 1,2-dioxygenase (448 aa).

The Proton acceptor role is filled by H303. H346 and E352 together coordinate Fe cation. Homogentisate-binding residues include Y361 and H382. A Fe cation-binding site is contributed by H382.

It belongs to the homogentisate dioxygenase family. As to quaternary structure, hexamer; dimer of trimers. Fe cation serves as cofactor.

It carries out the reaction homogentisate + O2 = 4-maleylacetoacetate + H(+). Its pathway is amino-acid degradation; L-phenylalanine degradation; acetoacetate and fumarate from L-phenylalanine: step 4/6. In terms of biological role, involved in the catabolism of homogentisate (2,5-dihydroxyphenylacetate or 2,5-OH-PhAc), a central intermediate in the degradation of phenylalanine and tyrosine. Catalyzes the oxidative ring cleavage of the aromatic ring of homogentisate to yield maleylacetoacetate. The sequence is that of Homogentisate 1,2-dioxygenase from Rhodopseudomonas palustris (strain BisB18).